The sequence spans 1338 residues: Thioester-containing protein 1 allele R1 (1338 aa).

The N-terminal stretch at 1–21 is a signal peptide; that stretch reads MWQFIRSRILTVIIFIGAAHG. Residues N68, N199, N242, N312, and N481 are each glycosylated (N-linked (GlcNAc...) asparagine). The may contain the cleavage site stretch occupies residues 580-609; the sequence is ENEFDIFHSLGLFARTLDDILFDSANEKTG. 3 N-linked (GlcNAc...) asparagine glycosylation sites follow: N637, N728, and N813. Residues 859–862 constitute a cross-link (isoglutamyl cysteine thioester (Cys-Gln)); it reads CGEQ. 2 N-linked (GlcNAc...) asparagine glycosylation sites follow: N919 and N1065. 3 cysteine pairs are disulfide-bonded: C1217/C1283, C1326/C1338, and C1329/C1334.

As to quaternary structure, heterodimer of a TEP1-N chain and an TEP1-C chain non-covalently linked. Forms a complex composed of TEP1-N and TEP1-C heterodimer, LRIM1 and APL1C; the interaction stabilizes TEP1-N and TEP1-C heterodimer, prevents its binding to tissues while circulating in the hemolymph and protects the thioester bond from hydrolysis. Mature TEP1 and to a lesser extent full-length TEP1 interact with SPCLIP1; the interaction is induced by microbial infection. Post-translationally, in the hemolymph, the full-length protein is cleaved by an unknow protease into a 75kDa N-terminal (TEP1-N) chain and an 80kDa C-terminal (TEP1-C) chain which remain non-covalently linked. The TEP1-C chain contains the thioester bond which covalently binds to the pathogen surface. Cleavage is induced by bacterial infection or aseptic wound injury. During embryonic and pupal development, the cleaved form is the predominant form. In terms of processing, N-glycosylated.

The protein localises to the secreted. Plays an essential role in the innate immune response against bacteria, fungi and protozoa infection. After proteolytic cleavage, the protein C-terminus binds covalently through a thioester bond to the pathogen surface resulting in pathogen clearance either by melanization or lysis. Initiate the recruitment and activation of a cascade of proteases, mostly of CLIP-domain serine proteases, which leads to the proteolytic cleavage of the prophenoloxidase (PPO) into active phenoloxidase (PO), the rate-limiting enzyme in melanin biosynthesis. In response to parasite P.berghei-mediated infection, binds to and mediates killing of ookinetes, as they egress from midgut epithelial cells into the basal labyrinth, by both lysis and melanization. During bacterial infection, binds to both Gram-positive and Gram-negative bacteria but only promotes phagocytosis of Gram-negative bacteria. Promotes the accumulation of SPCLIP1 onto the surface of P.berghei ookinetes and bacterium E.coli which leads to the melanization of the pathogen. Recruits CLIPA2 to bacteria surface. In response to bacterial infection, required for periostial hemocyte aggregation, but not for the aggregation of sessile hemocytes in non-periostial regions. During the late stage of fungus B.bassiana-mediated infection, required for the initiation of hyphae melanization by binding to the surface of hyphae and recruiting prophenoloxidase PPO to them. Plays a role in male fertility by binding to defective sperm cells and promoting their removal during spermatogenesis. Functionally, binds to and mediates killing of parasite P.bergei ookinetes by lysis and melanization. In terms of biological role, binds covalently through a thioester bond to the pathogen surface resulting in pathogen clearance. This Anopheles gambiae (African malaria mosquito) protein is Thioester-containing protein 1 allele R1.